A 461-amino-acid polypeptide reads, in one-letter code: MELKGKKVLVVGLGKSGLAAALFLRRRGAQVTVSDIRSAEALSKDIPALIEQGIAVEAGGHGLLTFRRQDLIVVSPGVPLDTPELVQVRKFGLPIIGEVELAARFLKGKTLAITGSNGKTTTTSLCGAILERAHQHVQVGGNIGLPVIALVDDSRDDGWSVLEISSFQLETTERFRPGIAVILNITPDHLDRHGSFENYVAAKERIFAAQTHDDALILNADDDAASRAAARASSRIFWFSRNRVIRQGAFVHEGNILFRAAEDAATEPILPLSEIPLKGAHNVENVLAAVCAARLAGVSAEAIRDAVRDFRAVEHRLEFVAEIGGVSFYNDSKATNVDAARKAIEAFPGGIHLILGGKDKNSDYRTLRPLMAGRVKAVYTIGSAAEKIMTHLDGAVPLIAAGTLDLAVNLAGGAASPGDVVLLAPACSSFDQFENYEQRGQVFKDLVLAHRGAAAWQNASA.

115–121 is a binding site for ATP; sequence GSNGKTT.

It belongs to the MurCDEF family.

The protein resides in the cytoplasm. The catalysed reaction is UDP-N-acetyl-alpha-D-muramoyl-L-alanine + D-glutamate + ATP = UDP-N-acetyl-alpha-D-muramoyl-L-alanyl-D-glutamate + ADP + phosphate + H(+). Its pathway is cell wall biogenesis; peptidoglycan biosynthesis. Functionally, cell wall formation. Catalyzes the addition of glutamate to the nucleotide precursor UDP-N-acetylmuramoyl-L-alanine (UMA). The polypeptide is UDP-N-acetylmuramoylalanine--D-glutamate ligase (Acidobacterium capsulatum (strain ATCC 51196 / DSM 11244 / BCRC 80197 / JCM 7670 / NBRC 15755 / NCIMB 13165 / 161)).